Here is a 94-residue protein sequence, read N- to C-terminus: Co-chaperonin GroES (94 aa).

This sequence belongs to the GroES chaperonin family. Heptamer of 7 subunits arranged in a ring. Interacts with the chaperonin GroEL.

The protein resides in the cytoplasm. Together with the chaperonin GroEL, plays an essential role in assisting protein folding. The GroEL-GroES system forms a nano-cage that allows encapsulation of the non-native substrate proteins and provides a physical environment optimized to promote and accelerate protein folding. GroES binds to the apical surface of the GroEL ring, thereby capping the opening of the GroEL channel. The polypeptide is Co-chaperonin GroES (Clostridioides difficile (Peptoclostridium difficile)).